The sequence spans 140 residues: Small ribosomal subunit protein uS19 (140 aa).

Residues 120-140 are disordered; the sequence is RPKHSAPGIGATRSSAHVSKK. Residues 131–140 show a composition bias toward polar residues; it reads TRSSAHVSKK.

It belongs to the universal ribosomal protein uS19 family.

Protein S19 forms a complex with S13 that binds strongly to the 16S ribosomal RNA. This chain is Small ribosomal subunit protein uS19, found in Nanoarchaeum equitans (strain Kin4-M).